Here is a 40-residue protein sequence, read N- to C-terminus: Ferredoxin-2 (40 aa).

In terms of domain architecture, 2Fe-2S ferredoxin-type spans 3 to 40 (YNIKLITPEGTKEITCSDSEYILDAAEEKGLDLPYSCR). Cysteine 39 provides a ligand contact to [2Fe-2S] cluster.

Belongs to the 2Fe2S plant-type ferredoxin family. It depends on [2Fe-2S] cluster as a cofactor.

It is found in the plastid. It localises to the chloroplast. In terms of biological role, ferredoxins are iron-sulfur proteins that transfer electrons in a wide variety of metabolic reactions. This chain is Ferredoxin-2, found in Pisum sativum (Garden pea).